We begin with the raw amino-acid sequence, 313 residues long: Phosphate import ATP-binding protein PstB 2 (313 aa).

Positions 1–33 (MSDSINTEPSTDTQTNGERTVETTSPSAETTAG) are enriched in polar residues. The interval 1–40 (MSDSINTEPSTDTQTNGERTVETTSPSAETTAGESEEQVR) is disordered. Residues 54 to 308 (LSVENLDVWY…PESQRVEDYI (255 aa)) enclose the ABC transporter domain. Position 86–93 (86–93 (GPSGCGKS)) interacts with ATP.

The protein belongs to the ABC transporter superfamily. Phosphate importer (TC 3.A.1.7) family. As to quaternary structure, the complex is composed of two ATP-binding proteins (PstB), two transmembrane proteins (PstC and PstA) and a solute-binding protein (PstS).

Its subcellular location is the cell membrane. It catalyses the reaction phosphate(out) + ATP + H2O = ADP + 2 phosphate(in) + H(+). Functionally, part of the ABC transporter complex PstSACB involved in phosphate import. Responsible for energy coupling to the transport system. This Haloarcula marismortui (strain ATCC 43049 / DSM 3752 / JCM 8966 / VKM B-1809) (Halobacterium marismortui) protein is Phosphate import ATP-binding protein PstB 2.